The primary structure comprises 360 residues: Lipid-A-disaccharide synthase (360 aa).

It belongs to the LpxB family.

It catalyses the reaction a lipid X + a UDP-2-N,3-O-bis[(3R)-3-hydroxyacyl]-alpha-D-glucosamine = a lipid A disaccharide + UDP + H(+). It participates in bacterial outer membrane biogenesis; LPS lipid A biosynthesis. Functionally, condensation of UDP-2,3-diacylglucosamine and 2,3-diacylglucosamine-1-phosphate to form lipid A disaccharide, a precursor of lipid A, a phosphorylated glycolipid that anchors the lipopolysaccharide to the outer membrane of the cell. This chain is Lipid-A-disaccharide synthase, found in Helicobacter pylori (strain Shi470).